Here is a 318-residue protein sequence, read N- to C-terminus: MLIDKFERKIDYIRVSVTSRCNFRCLYCMPNTPFEWEPHENILRYEEMFEFLRLAIDEGINKIRLTGGEPLLRKDLDVFVKMLHDYRPDLDLALTTNGYYLKEYAKKLKDAGLKRVNMSLDSLKPEVAAKIAQKDVLNRVIQGLDEALKVGLKVKLNTVVMQGINDTEILDLLEFAKNKGVTIRFIEFMENERAYPGVKRVDSKVILDKIAKKYKFKELPKDNSASRYFETEDGYVFGIIEPHNEDFCKSCNRIRLTAEGYLIPCLFFTESYNIKEALREGNIQKASEILREVVANKPEKNDWQDEEVSTRAFWETGG.

Residues 5–217 (KFERKIDYIR…DKIAKKYKFK (213 aa)) enclose the Radical SAM core domain. A GTP-binding site is contributed by R14. Residues C21 and C25 each coordinate [4Fe-4S] cluster. Y27 contacts S-adenosyl-L-methionine. C28 contributes to the [4Fe-4S] cluster binding site. R64 is a binding site for GTP. G68 contributes to the S-adenosyl-L-methionine binding site. T95 provides a ligand contact to GTP. An S-adenosyl-L-methionine-binding site is contributed by S119. Residue K155 participates in GTP binding. M189 lines the S-adenosyl-L-methionine pocket. C248 and C251 together coordinate [4Fe-4S] cluster. 253 to 255 (RIR) lines the GTP pocket. C265 serves as a coordination point for [4Fe-4S] cluster.

This sequence belongs to the radical SAM superfamily. MoaA family. In terms of assembly, monomer and homodimer. [4Fe-4S] cluster serves as cofactor.

It carries out the reaction GTP + AH2 + S-adenosyl-L-methionine = (8S)-3',8-cyclo-7,8-dihydroguanosine 5'-triphosphate + 5'-deoxyadenosine + L-methionine + A + H(+). The protein operates within cofactor biosynthesis; molybdopterin biosynthesis. Functionally, catalyzes the cyclization of GTP to (8S)-3',8-cyclo-7,8-dihydroguanosine 5'-triphosphate. The protein is GTP 3',8-cyclase of Nautilia profundicola (strain ATCC BAA-1463 / DSM 18972 / AmH).